The chain runs to 183 residues: MIIKREMRQDKRAQPKPPINENISAREVRLIGADGQQVGVVSIDEAIRLAEEAKLDLVEISADAVPPVCRIMDYGKHLFEKKKQAAVAKKNQKQAQVKEIKFRPGTEEGDYQVKLRNLVRFLSEGDKAKVSLRFRGREMAHQELGMELLKRVEADLVEYGTVEQHPKLEGRQLMMVIAPKKKK.

Belongs to the IF-3 family. As to quaternary structure, monomer.

It localises to the cytoplasm. In terms of biological role, IF-3 binds to the 30S ribosomal subunit and shifts the equilibrium between 70S ribosomes and their 50S and 30S subunits in favor of the free subunits, thus enhancing the availability of 30S subunits on which protein synthesis initiation begins. This chain is Translation initiation factor IF-3, found in Pseudomonas aeruginosa (strain ATCC 15692 / DSM 22644 / CIP 104116 / JCM 14847 / LMG 12228 / 1C / PRS 101 / PAO1).